We begin with the raw amino-acid sequence, 461 residues long: Photosystem II CP43 reaction center protein (461 aa).

A propeptide spanning residues 1 to 2 (ME) is cleaved from the precursor. Thr-3 is subject to N-acetylthreonine. Thr-3 is subject to Phosphothreonine. 5 consecutive transmembrane segments (helical) span residues 57–81 (LFEVAHFVPQKPMYEQGLILLPHLA), 122–143 (LAGPDTLEESFRFFGYTWKRKK), 166–188 (KAMYGGGVYDTWWPGGGDVRSIT), 243–263 (RPSPWVVRTFVWSGEAYLSYS), and 279–300 (WFNNTVYPSEFYGPTGPEASQA). Residue Glu-355 coordinates [CaMn4O5] cluster. The helical transmembrane segment at 435–459 (RARAAAIGFEKGIDRSREIARKLKP) threads the bilayer.

This sequence belongs to the PsbB/PsbC family. PsbC subfamily. As to quaternary structure, PSII is composed of 1 copy each of membrane proteins PsbA, PsbB, PsbC, PsbD, PsbE, PsbF, PsbH, PsbI, PsbJ, PsbK, PsbL, PsbM, PsbT, PsbY, PsbZ, Psb30/Ycf12, at least 3 peripheral proteins of the oxygen-evolving complex and a large number of cofactors. It forms dimeric complexes. The cofactor is Binds multiple chlorophylls and provides some of the ligands for the Ca-4Mn-5O cluster of the oxygen-evolving complex. It may also provide a ligand for a Cl- that is required for oxygen evolution. PSII binds additional chlorophylls, carotenoids and specific lipids..

It is found in the plastid. The protein localises to the chloroplast thylakoid membrane. Functionally, one of the components of the core complex of photosystem II (PSII). It binds chlorophyll and helps catalyze the primary light-induced photochemical processes of PSII. PSII is a light-driven water:plastoquinone oxidoreductase, using light energy to abstract electrons from H(2)O, generating O(2) and a proton gradient subsequently used for ATP formation. The polypeptide is Photosystem II CP43 reaction center protein (Euglena gracilis).